Reading from the N-terminus, the 112-residue chain is UPF0102 protein Cla_1413 (112 aa).

This sequence belongs to the UPF0102 family.

In Campylobacter lari (strain RM2100 / D67 / ATCC BAA-1060), this protein is UPF0102 protein Cla_1413.